The sequence spans 1526 residues: Cell wall protein IFF4 (1526 aa).

An N-terminal signal peptide occupies residues 1 to 20 (MKFLQKFIITVALLTNIVFA). 2 N-linked (GlcNAc...) asparagine glycosylation sites follow: asparagine 93 and asparagine 498. A disordered region spans residues 512 to 541 (SSAGGSSFPEETHMLQTSDSDLSSTAGSES). Polar residues predominate over residues 525 to 541 (MLQTSDSDLSSTAGSES). N-linked (GlcNAc...) asparagine glycosylation is present at asparagine 637. Residues 1180–1207 (WNGAKSDSPHTSESDITSQYNSHSTSVA) are disordered. The span at 1193–1207 (SDITSQYNSHSTSVA) shows a compositional bias: polar residues. Residues asparagine 1451, asparagine 1463, asparagine 1479, asparagine 1502, and asparagine 1506 are each glycosylated (N-linked (GlcNAc...) asparagine). Residues 1455–1483 (SSVSGYPTNRSDSNGYANTPTTGSNTSGD) form a disordered region. Asparagine 1502 carries the GPI-anchor amidated asparagine lipid modification. The propeptide at 1503–1526 (GSTNISNKYLKFLGTVVSILILLI) is removed in mature form.

This sequence belongs to the HYR1/IFF family. The GPI-anchor is attached to the protein in the endoplasmic reticulum and serves to target the protein to the cell surface. There, the glucosamine-inositol phospholipid moiety is cleaved off and the GPI-$modified mannoprotein is covalently attached via its lipidless GPI glycan remnant to the 1,6-beta-glucan of the outer cell wall layer.

The protein localises to the secreted. Its subcellular location is the cell wall. The protein resides in the membrane. In terms of biological role, GPI-anchored cell wall protein involved in cell wall organization, hyphal growth, as well as in host-fungal interaction and virulence. Plays a role in adherence to plastic and to host epithelial cells. Promotes the tissue fungal burden during murine vaginal candidiasis. Also increases susceptibility to neutrophil-mediated killing. Furthermore, contributes to the severity of hematogenously disseminated candidiasis in normal mice, but not in neutropenic mice. The protein is Cell wall protein IFF4 (IFF4) of Candida albicans (strain SC5314 / ATCC MYA-2876) (Yeast).